A 328-amino-acid chain; its full sequence is Dolichyl-diphosphooligosaccharide--protein glycosyltransferase subunit MAGT1 (328 aa).

The signal sequence occupies residues 1 to 22 (MLHKLLIVVFLVVCLHDMRLNG). Residues 23 to 177 (QKKKETLLSE…DVHIRVIRPP (155 aa)) are Extracellular-facing. The Thioredoxin domain maps to 40–168 (WVSKRAVVRL…LARWVADRTD (129 aa)). N-linked (GlcNAc...) asparagine glycosylation occurs at N64. C80 and C83 form a disulfide bridge. The chain crosses the membrane as a helical span at residues 178 to 198 (NYAGPLMLGLLLAFIGSLAYL). Topologically, residues 199 to 202 (RRNN) are cytoplasmic. The helical transmembrane segment at 203–223 (LEFLFNKNVWAFSALCFVLIM) threads the bilayer. Residues 224-257 (TSGQMWNHIRGPPYAHKNPNTGQVSYIHGSSQAQ) are Extracellular-facing. Residues 258 to 278 (FVAETHIVLLFNAAVTIGMVL) traverse the membrane as a helical segment. Residues 279–293 (LHEAATSGLDIVKRK) are Cytoplasmic-facing. Residues 294 to 314 (IMCVAGIGLVVLFFSWLLSVF) form a helical membrane-spanning segment. The Extracellular portion of the chain corresponds to 315-328 (RAKYHGYPYSFLFG).

Belongs to the OST3/OST6 family. Accessory component of the STT3B-containing form of the oligosaccharyltransferase (OST) complex.

The protein resides in the cell membrane. The protein localises to the endoplasmic reticulum. It localises to the endoplasmic reticulum membrane. It participates in protein modification; protein glycosylation. Its function is as follows. Accessory component of the STT3B-containing form of the N-oligosaccharyl transferase (OST) complex which catalyzes the transfer of a high mannose oligosaccharide from a lipid-linked oligosaccharide donor to an asparagine residue within an Asn-X-Ser/Thr consensus motif in nascent polypeptide chains. Involved in N-glycosylation of STT3B-dependent substrates. Specifically required for the glycosylation of a subset of acceptor sites that are near cysteine residues; in this function seems to act redundantly with TUSC3. In its oxidized form proposed to form transient mixed disulfides with a glycoprotein substrate to facilitate access of STT3B to the unmodified acceptor site. Also has oxidoreductase-independent functions in the STT3B-containing OST complex possibly involving substrate recognition. Could indirectly play a role in Mg(2+) transport. This Danio rerio (Zebrafish) protein is Dolichyl-diphosphooligosaccharide--protein glycosyltransferase subunit MAGT1.